A 450-amino-acid chain; its full sequence is Succinate-semialdehyde dehydrogenase (450 aa).

Residue Trp-119–Asn-120 coordinates NADP(+). Residue Arg-128 coordinates substrate. NADP(+)-binding positions include Lys-143–Lys-146 and Gly-197–Ser-198. The active-site Proton acceptor is Glu-219. Residue Leu-220 participates in NADP(+) binding. Substrate is bound by residues Arg-247 and Cys-253. The Nucleophile role is filled by Cys-253. Position 350 (Glu-350) interacts with NADP(+). Substrate is bound at residue Ser-410.

It belongs to the aldehyde dehydrogenase family. In terms of assembly, homodimer.

It carries out the reaction succinate semialdehyde + NAD(+) + H2O = succinate + NADH + 2 H(+). The catalysed reaction is succinate semialdehyde + NADP(+) + H2O = succinate + NADPH + 2 H(+). It participates in alkaloid degradation; nicotine degradation. Functionally, catalyzes the NAD(P)(+)-dependent oxidation of succinate semialdehyde to succinate, which may enter the citric acid cycle. Is involved in the catabolism of 4-methylaminobutanoate produced from nicotine. Acts preferentially with NADP(+) as cosubstrate but can also use NAD(+). To a lesser extent, is active also towards butyraldehyde (8.5% of the activity observed with succinate semialdehyde) and propionaldehyde (1.6% of the activity observed with succinate semialdehyde) as substrates. This Paenarthrobacter nicotinovorans (Arthrobacter nicotinovorans) protein is Succinate-semialdehyde dehydrogenase (sad).